The following is a 367-amino-acid chain: 2-aminoethylphosphonate--pyruvate transaminase (367 aa).

The residue at position 194 (Lys194) is an N6-(pyridoxal phosphate)lysine.

Belongs to the class-V pyridoxal-phosphate-dependent aminotransferase family. PhnW subfamily. As to quaternary structure, homodimer. Pyridoxal 5'-phosphate is required as a cofactor.

It carries out the reaction (2-aminoethyl)phosphonate + pyruvate = phosphonoacetaldehyde + L-alanine. Involved in phosphonate degradation. This chain is 2-aminoethylphosphonate--pyruvate transaminase, found in Salmonella schwarzengrund (strain CVM19633).